We begin with the raw amino-acid sequence, 333 residues long: Phosphoribosylformylglycinamidine cyclo-ligase (333 aa).

This sequence belongs to the AIR synthase family.

It localises to the cytoplasm. It carries out the reaction 2-formamido-N(1)-(5-O-phospho-beta-D-ribosyl)acetamidine + ATP = 5-amino-1-(5-phospho-beta-D-ribosyl)imidazole + ADP + phosphate + H(+). Its pathway is purine metabolism; IMP biosynthesis via de novo pathway; 5-amino-1-(5-phospho-D-ribosyl)imidazole from N(2)-formyl-N(1)-(5-phospho-D-ribosyl)glycinamide: step 2/2. The protein is Phosphoribosylformylglycinamidine cyclo-ligase of Clostridium perfringens (strain ATCC 13124 / DSM 756 / JCM 1290 / NCIMB 6125 / NCTC 8237 / Type A).